The sequence spans 179 residues: tRNA (cytidine(56)-2'-O)-methyltransferase (179 aa).

S-adenosyl-L-methionine is bound by residues Leu-82, 112-116 (GAEKV), and 130-137 (VGNQPHSE).

This sequence belongs to the aTrm56 family. Homodimer.

It is found in the cytoplasm. The catalysed reaction is cytidine(56) in tRNA + S-adenosyl-L-methionine = 2'-O-methylcytidine(56) in tRNA + S-adenosyl-L-homocysteine + H(+). Its function is as follows. Specifically catalyzes the AdoMet-dependent 2'-O-ribose methylation of cytidine at position 56 in tRNAs. In Methanococcus maripaludis (strain C5 / ATCC BAA-1333), this protein is tRNA (cytidine(56)-2'-O)-methyltransferase.